The following is a 122-amino-acid chain: UPF0102 protein Cgl2031/cg2228 (122 aa).

The protein belongs to the UPF0102 family.

The polypeptide is UPF0102 protein Cgl2031/cg2228 (Corynebacterium glutamicum (strain ATCC 13032 / DSM 20300 / JCM 1318 / BCRC 11384 / CCUG 27702 / LMG 3730 / NBRC 12168 / NCIMB 10025 / NRRL B-2784 / 534)).